The chain runs to 227 residues: 7-cyano-7-deazaguanine synthase (227 aa).

ATP is bound at residue 8–18; sequence LSGGTDSATVL. Residues C192, C202, C205, and C208 each contribute to the Zn(2+) site.

This sequence belongs to the QueC family. The cofactor is Zn(2+).

It catalyses the reaction 7-carboxy-7-deazaguanine + NH4(+) + ATP = 7-cyano-7-deazaguanine + ADP + phosphate + H2O + H(+). Its pathway is purine metabolism; 7-cyano-7-deazaguanine biosynthesis. Catalyzes the ATP-dependent conversion of 7-carboxy-7-deazaguanine (CDG) to 7-cyano-7-deazaguanine (preQ(0)). The polypeptide is 7-cyano-7-deazaguanine synthase (Rickettsia prowazekii (strain Madrid E)).